The primary structure comprises 85 residues: Large ribosomal subunit protein bL27 (85 aa).

Belongs to the bacterial ribosomal protein bL27 family.

The chain is Large ribosomal subunit protein bL27 from Campylobacter curvus (strain 525.92).